The primary structure comprises 181 residues: Regulator of G-protein signaling 10 (181 aa).

The segment at Met-1–Leu-32 is disordered. Positions Gly-23–Leu-32 are enriched in low complexity. Phosphoserine occurs at positions 24 and 41. An RGS domain is found at Ser-41–Lys-156. The S-palmitoyl cysteine moiety is linked to residue Cys-74. A disordered region spans residues Thr-158 to Thr-181. The residue at position 176 (Ser-176) is a Phosphoserine.

As to quaternary structure, interacts with GNAZ, GNAI1 and GNAI3. Associates specifically with the activated, GTP-bound forms of GNAZ and GNAI3.

Its subcellular location is the cytoplasm. It is found in the cytosol. The protein localises to the nucleus. Its function is as follows. Regulates G protein-coupled receptor signaling cascades, including signaling downstream of the muscarinic acetylcholine receptor CHRM2. Inhibits signal transduction by increasing the GTPase activity of G protein alpha subunits, thereby driving them into their inactive GDP-bound form. Modulates the activity of potassium channels that are activated in response to CHRM2 signaling. Activity on GNAZ is inhibited by palmitoylation of the G-protein. This chain is Regulator of G-protein signaling 10 (RGS10), found in Homo sapiens (Human).